A 347-amino-acid chain; its full sequence is Coproporphyrinogen-III oxidase, aerobic 2 (347 aa).

The disordered stretch occupies residues 1-31 (MGRHSDNSLQESANHTVLLTSPTNTIPKDSR). Polar residues predominate over residues 7 to 31 (NSLQESANHTVLLTSPTNTIPKDSR). An important for dimerization region spans residues 75–84 (VIREGRVFEQ). Serine 119 serves as a coordination point for substrate. Histidine 133 acts as the Proton donor in catalysis. Substrate contacts are provided by residues 135–137 (NYR) and 305–310 (KGRTES). The tract at residues 287–322 (YVEFNLVYDRGTVFGLQTKGRTESILMSLPPLARWE) is important for dimerization.

It belongs to the aerobic coproporphyrinogen-III oxidase family. Homodimer.

Its subcellular location is the cytoplasm. It catalyses the reaction coproporphyrinogen III + O2 + 2 H(+) = protoporphyrinogen IX + 2 CO2 + 2 H2O. It functions in the pathway porphyrin-containing compound metabolism; protoporphyrin-IX biosynthesis; protoporphyrinogen-IX from coproporphyrinogen-III (O2 route): step 1/1. Functionally, key enzyme in heme biosynthesis. Catalyzes the oxidative decarboxylation of propionic acid side chains of rings A and B of coproporphyrinogen III. This is Coproporphyrinogen-III oxidase, aerobic 2 from Nostoc sp. (strain PCC 7120 / SAG 25.82 / UTEX 2576).